A 438-amino-acid polypeptide reads, in one-letter code: Protein kinase PINOID (438 aa).

A disordered region spans residues 1-24; it reads MLRESDGEMSLGTTNSPISSGTES. Over residues 11 to 24 the composition is skewed to polar residues; it reads LGTTNSPISSGTES. The Protein kinase domain maps to 75–394; that stretch reads FRLMRRIGAG…AAEVKVHPFF (320 aa). ATP contacts are provided by residues 81 to 89 and K109; that span reads IGAGDIGTV. Catalysis depends on D205, which acts as the Proton acceptor. The 44-residue stretch at 395-438 folds into the AGC-kinase C-terminal domain; sequence KGLNFALIRTLTPPEIPSSVVKKPMKSATFSGRSSNKPAAFDYF.

This sequence belongs to the protein kinase superfamily. Ser/Thr protein kinase family. Interacts with PDK1, CML12 and PBP1. Component of a complex made of PINs (e.g. PIN1 and PIN2), MAB4/MELs (e.g. NPY1/MAB4 and NPY5/MEL1) and AGC kinases (e.g. D6PK and PID) at the plasma membrane. Binds directly to PIN2, NPY1/MAB4 and NPY5/MEL1. Post-translationally, autophosphorylated. Phosphorylated by PDK1. Expressed in root hair cells, shoot xylem parenchyma cells and endodermis around the vasculature. Expressed in anther primordia, vasculature of the growing flower stalk, young pedicels and bracts and developing sepals, but not in petals. In pistils, transiently expressed in the vasculature of the style and the septum, and in the integuments and funiculus of the developing ovule.

It localises to the cytoplasm. The protein resides in the cytosol. The protein localises to the cell membrane. The enzyme catalyses L-seryl-[protein] + ATP = O-phospho-L-seryl-[protein] + ADP + H(+). The catalysed reaction is L-threonyl-[protein] + ATP = O-phospho-L-threonyl-[protein] + ADP + H(+). Activated by magnesium and PDK1. Inhibited by staurosporine. Repressed by calcium. Its function is as follows. Serine/threonine-protein kinase involved in the regulation of auxin signaling. Acts as a positive regulator of cellular auxin efflux and regulates organ development by enhancing polar auxin transport. Phosphorylates conserved serine residues in the PIN auxin efflux carriers. Phosphorylation of PIN proteins is required and sufficient for apical-basal PIN polarity that enables directional intercellular auxin fluxes, which mediate differential growth, tissue patterning and organogenesis. Phosphorylates PIN proteins (e.g. PIN1 and PIN2), especially when NPY proteins (e.g. NPY1/MAB4 and NPY5/MEL1) are recruited at the plasma membrane; this enhances the polarized localizations (apical or basal) of PINs in the cell by limiting their lateral diffusion-based escape. Acts in association with PIN1 to control the establishment of bilateral symmetry and promotion of cotyledon outgrowth. Regulates root gravitropism through modulation of PIN2-dependent basipetal auxin transport. Required for polarization of PIN3-dependent auxin transport for hypocotyl gravitropic response. The protein kinase activity of PID is essential for its auxin efflux regulatory function. PID kinase and PP2A phosphatase activities antagonistically regulate phosphorylation of PIN proteins, affecting PIN sorting. This Arabidopsis thaliana (Mouse-ear cress) protein is Protein kinase PINOID.